A 352-amino-acid chain; its full sequence is Quinolinate synthase (352 aa).

The iminosuccinate site is built by H48 and S69. C114 provides a ligand contact to [4Fe-4S] cluster. Iminosuccinate-binding positions include 140–142 (YAN) and S157. A [4Fe-4S] cluster-binding site is contributed by C201. Residues 227 to 229 (HPE) and T244 contribute to the iminosuccinate site. Residue C298 participates in [4Fe-4S] cluster binding.

It belongs to the quinolinate synthase family. Type 1 subfamily. It depends on [4Fe-4S] cluster as a cofactor.

Its subcellular location is the cytoplasm. It catalyses the reaction iminosuccinate + dihydroxyacetone phosphate = quinolinate + phosphate + 2 H2O + H(+). It participates in cofactor biosynthesis; NAD(+) biosynthesis; quinolinate from iminoaspartate: step 1/1. Functionally, catalyzes the condensation of iminoaspartate with dihydroxyacetone phosphate to form quinolinate. In Pseudomonas fluorescens (strain Pf0-1), this protein is Quinolinate synthase.